A 287-amino-acid polypeptide reads, in one-letter code: Small ribosomal subunit biogenesis GTPase RsgA (287 aa).

A CP-type G domain is found at 61-218 (SSELIRPTVA…LVDTPGFTTL (158 aa)). GTP is bound by residues 110 to 113 (NKED) and 161 to 169 (GPSGAGKST). 4 residues coordinate Zn(2+): Cys242, Cys247, His249, and Cys255.

Belongs to the TRAFAC class YlqF/YawG GTPase family. RsgA subfamily. In terms of assembly, monomer. Associates with 30S ribosomal subunit, binds 16S rRNA. Requires Zn(2+) as cofactor.

It is found in the cytoplasm. In terms of biological role, one of several proteins that assist in the late maturation steps of the functional core of the 30S ribosomal subunit. Helps release RbfA from mature subunits. May play a role in the assembly of ribosomal proteins into the subunit. Circularly permuted GTPase that catalyzes slow GTP hydrolysis, GTPase activity is stimulated by the 30S ribosomal subunit. The polypeptide is Small ribosomal subunit biogenesis GTPase RsgA (Clostridium perfringens (strain SM101 / Type A)).